Here is a 284-residue protein sequence, read N- to C-terminus: Averufin oxidase A (284 aa).

An N-terminal signal peptide occupies residues 1–23; the sequence is MPTYALLGATGATGSAILRCLLA. N-linked (GlcNAc...) asparagine glycosylation is found at asparagine 62, asparagine 86, and asparagine 190.

Belongs to the avfA family.

It functions in the pathway mycotoxin biosynthesis. Its function is as follows. Averufin oxidase A; part of the fragmented gene cluster that mediates the biosynthesis of dothistromin (DOTH), a polyketide toxin very similar in structure to the aflatoxin precursor, versicolorin B. The first step of the pathway is the conversion of acetate to norsolorinic acid (NOR) and requires the fatty acid synthase subunits hexA and hexB, as well as the polyketide synthase pksA. PksA combines a hexanoyl starter unit and 7 malonyl-CoA extender units to synthesize the precursor NOR. The hexanoyl starter unit is provided to the acyl-carrier protein (ACP) domain by the fungal fatty acid synthase hexA/hexB. The second step is the conversion of NOR to averantin (AVN) and requires the norsolorinic acid ketoreductase nor1, which catalyzes the dehydration of norsolorinic acid to form (1'S)-averantin. The cytochrome P450 monooxygenase avnA then catalyzes the hydroxylation of AVN to 5'hydroxyaverantin (HAVN). The next step is performed by adhA that transforms HAVN to averufin (AVF). Averufin might then be converted to hydroxyversicolorone by cypX and avfA. Hydroxyversicolorone is further converted versiconal hemiacetal acetate (VHA) by moxY. VHA is then the substrate for the versiconal hemiacetal acetate esterase est1 to yield versiconal (VAL). Versicolorin B synthase vbsA then converts VAL to versicolorin B (VERB) by closing the bisfuran ring. Then, the activity of the versicolorin B desaturase verB leads to versicolorin A (VERA). DotB, a predicted chloroperoxidase, may perform epoxidation of the A-ring of VERA. Alternatively, a cytochrome P450, such as cypX or avnA could catalyze this step. It is also possible that another, uncharacterized, cytochrome P450 enzyme is responsible for this step. Opening of the epoxide could potentially be achieved by the epoxide hydrolase epoA. However, epoA seems not to be required for DOTH biosynthesis, but other epoxide hydrolases may have the ability to complement this hydrolysis. Alternatively, opening of the epoxide ring could be achieved non-enzymatically. The next step is the deoxygenation of ring A to yield the 5,8-dihydroxyanthraquinone which is most likely catalyzed by the NADPH dehydrogenase encoded by ver1. The last stages of DOTH biosynthesis are proposed to involve hydroxylation of the bisfuran. OrdB and norB might have oxidative roles here. An alternative possibility is that cytochrome P450 monoogenases such as avnA and cypX might perform these steps in addition to previously proposed steps. In Dothistroma septosporum (strain NZE10 / CBS 128990) (Red band needle blight fungus), this protein is Averufin oxidase A.